The sequence spans 595 residues: Mitoguardin 1 (595 aa).

The next 2 membrane-spanning stretches (helical) occupy residues 11–31 and 38–58; these read LPIKLAALHFLDLPLSVYYSL and TGTKKLFAATAFGAVSLIIIA.

This sequence belongs to the mitoguardin family. As to quaternary structure, homodimer and heterodimer; forms heterodimers with miga2.

Its subcellular location is the mitochondrion outer membrane. In terms of biological role, regulator of mitochondrial fusion: acts by forming homo- and heterodimers at the mitochondrial outer membrane and facilitating the formation of pld6/MitoPLD dimers. May act by regulating phospholipid metabolism via pld6/MitoPLD. The chain is Mitoguardin 1 from Danio rerio (Zebrafish).